The chain runs to 3640 residues: Serine/threonine-protein kinase SMG1 (3640 aa).

Polar residues predominate over residues 21-34 (NDWQPRSDSLSASQ). A disordered region spans residues 21–41 (NDWQPRSDSLSASQDGVKCSV). The FAT domain occupies 1495–1843 (YCHSGKCELA…LYPAIVGSIS (349 aa)). One copy of the HEAT repeat lies at 1794-1829 (APWRGIIPQLFSRLNHPEAYIRQSICSLLCRVAQDS). The tract at residues 1870 to 1890 (GLCGGESETGSGPTSQESSRG) is disordered. Low complexity predominate over residues 1874–1887 (GESETGSGPTSQES). Residues 2102 to 2441 (VGNTITILPT…MERDITRSLF (340 aa)) enclose the PI3K/PI4K catalytic domain. The G-loop stretch occupies residues 2108 to 2114 (ILPTKTK). The interval 2310–2318 (GLGDRHLDN) is catalytic loop. The tract at residues 2330-2354 (HIDYNVCFEKGKSLRVPEKVPFRMT) is activation loop. The FATC domain occupies 3608–3640 (RRMSVTEQVDYVIKEATNVDNLAQLYEGWTAWV).

Belongs to the PI3/PI4-kinase family. Mn(2+) serves as cofactor. Post-translationally, autophosphorylated.

The protein resides in the nucleus. The protein localises to the cytoplasm. The catalysed reaction is L-seryl-[protein] + ATP = O-phospho-L-seryl-[protein] + ADP + H(+). It catalyses the reaction L-threonyl-[protein] + ATP = O-phospho-L-threonyl-[protein] + ADP + H(+). Functionally, serine/threonine protein kinase involved in both mRNA surveillance and genotoxic stress response pathways. Recognizes the substrate consensus sequence [ST]-Q. Plays a central role in nonsense-mediated decay (NMD) of mRNAs containing premature stop codons by phosphorylating UPF1/RENT1. This is Serine/threonine-protein kinase SMG1 from Danio rerio (Zebrafish).